The following is a 169-amino-acid chain: Styrene-oxide isomerase (169 aa).

4 helical membrane passes run 13-33 (GILM…HLVG), 61-81 (PALN…LGFA), 85-105 (PHLL…FYFF), and 129-149 (FLAL…LAVI).

The protein localises to the membrane. It catalyses the reaction styrene oxide = 2-phenylacetaldehyde. It functions in the pathway aromatic compound metabolism. Its function is as follows. Epoxystyrene isomerase that catalyzes the second step in the aerobic styrene degradation pathway by converting epoxystyrene to phenylacetaldehyde. The chain is Styrene-oxide isomerase (styC) from Pseudomonas fluorescens.